The following is a 364-amino-acid chain: Probable zinc transporter 10 (364 aa).

The first 28 residues, 1 to 28, serve as a signal peptide directing secretion; it reads MTKSHVIFSASIALFLLLSISHFPGALS. Over 29-52 the chain is Extracellular; that stretch reads QSNKDCQSKSNYSCIDKNKALDLK. The helical transmembrane segment at 53–73 threads the bilayer; the sequence is LLSIFSILITSLIGVCLPFFA. The Cytoplasmic segment spans residues 74–85; it reads RSIPAFQPEKSH. The chain crosses the membrane as a helical span at residues 86-106; it reads FLIVKSFASGIILSTGFMHVL. Residues 107 to 125 are Extracellular-facing; the sequence is PDSFEMLSSPCLNDNPWHK. A helical transmembrane segment spans residues 126-146; the sequence is FPFAGFVAMMSAVFTLMVDSI. At 147–209 the chain is on the cytoplasmic side; the sequence is TTSVFTKSGR…GSYLQLLRYR (63 aa). Residues 210–230 form a helical membrane-spanning segment; that stretch reads ILAIVLELGIVVQSIVIGLSV. Residues 231 to 241 lie on the Extracellular side of the membrane; sequence GDTNNTCTIKG. Residues 242–262 form a helical membrane-spanning segment; that stretch reads LVAALCFHQMFEGMGLGGCIL. Residues 263 to 271 are Cytoplasmic-facing; the sequence is QAEYGWVKK. Residues 272 to 292 form a helical membrane-spanning segment; sequence AVMAFFFAVTTPFGVVLGMAL. Over 293 to 303 the chain is Extracellular; that stretch reads SKTYKENSPES. A helical membrane pass occupies residues 304–324; it reads LITVGLLNASSAGLLIYMALV. The Cytoplasmic portion of the chain corresponds to 325–343; the sequence is DLLAADFMGQKMQRSIKLQ. A helical transmembrane segment spans residues 344–364; that stretch reads LKSYAAVLLGAGGMSVMAKWA.

It belongs to the ZIP transporter (TC 2.A.5) family.

Its subcellular location is the cell membrane. Its function is as follows. Probably mediates zinc uptake from the rhizosphere. The protein is Probable zinc transporter 10 (ZIP10) of Arabidopsis thaliana (Mouse-ear cress).